The chain runs to 348 residues: MLASVAGPISLALVLLALCTRPAMGQDCSAQCQCAAEAAPHCPAGVSLVLDGCGCCRVCAKQLGELCTERDPCDPHKGLFCDFGSPANRKIGVCTAKDGAPCVFGGSVYRSGESFQSSCKYQCTCLDGAVGCVPLCSMDVRLPSPDCPFPRRVKLPGKCCEEWVCDEPKDRTAVGPALAAYRLEDTFGPDPTMMRANCLVQTTEWSACSKTCGMGISTRVTNDNTFCRLEKQSRLCMVRPCEADLEENIKKGKKCIRTPKIAKPVKFELSGCTSVKTYRAKFCGVCTDGRCCTPHRTTTLPVEFKCPDGEIMKKNMMFIKTCACHYNCPGDNDIFESLYYRKMYGDMA.

The first 25 residues, 1–25 (MLASVAGPISLALVLLALCTRPAMG), serve as a signal peptide directing secretion. One can recognise an IGFBP N-terminal domain in the interval 26–97 (QDCSAQCQCA…NRKIGVCTAK (72 aa)). Disulfide bonds link cysteine 28-cysteine 53, cysteine 32-cysteine 55, cysteine 34-cysteine 56, cysteine 42-cysteine 59, cysteine 67-cysteine 81, and cysteine 73-cysteine 94. In terms of domain architecture, VWFC spans 100 to 166 (APCVFGGSVY…GKCCEEWVCD (67 aa)). Residues 197 to 242 (NCLVQTTEWSACSKTCGMGISTRVTNDNTFCRLEKQSRLCMVRPCE) enclose the TSP type-1 domain. Residues 246 to 348 (EENIKKGKKC…YYRKMYGDMA (103 aa)) are heparin-binding. 5 disulfides stabilise this stretch: cysteine 255/cysteine 292, cysteine 272/cysteine 306, cysteine 283/cysteine 322, cysteine 286/cysteine 324, and cysteine 291/cysteine 328. Positions 255–329 (CIRTPKIAKP…KTCACHYNCP (75 aa)) constitute a CTCK domain.

Belongs to the CCN family. In terms of assembly, monomer. Interacts with TSKU. Testis, spleen, kidney, lung, heart, and brain (lowest level in testis and highest in lung).

The protein resides in the secreted. The protein localises to the extracellular space. It localises to the extracellular matrix. In terms of biological role, major connective tissue mitoattractant secreted by vascular endothelial cells. Promotes proliferation and differentiation of chondrocytes. Is involved in the stimulation of osteoblast differentiation and has a critical role in osteogenesis. Mediates heparin- and divalent cation-dependent cell adhesion in many cell types including fibroblasts, myofibroblasts, endothelial and epithelial cells. Enhances fibroblast growth factor-induced DNA synthesis. This is CCN family member 2 from Mus musculus (Mouse).